A 193-amino-acid chain; its full sequence is Putative 3-methyladenine DNA glycosylase (193 aa).

This sequence belongs to the DNA glycosylase MPG family.

This is Putative 3-methyladenine DNA glycosylase from Agrobacterium fabrum (strain C58 / ATCC 33970) (Agrobacterium tumefaciens (strain C58)).